We begin with the raw amino-acid sequence, 336 residues long: Glyceraldehyde-3-phosphate dehydrogenase, chromosomal (336 aa).

NAD(+)-binding positions include 12-13 (RI), D37, R81, and S123. D-glyceraldehyde 3-phosphate contacts are provided by residues 154–156 (SCT) and T185. The active-site Nucleophile is C155. Residue N186 coordinates NAD(+). Residues R200, 213-214 (TG), and R236 contribute to the D-glyceraldehyde 3-phosphate site. N317 provides a ligand contact to NAD(+).

Belongs to the glyceraldehyde-3-phosphate dehydrogenase family. Homotetramer.

It catalyses the reaction D-glyceraldehyde 3-phosphate + phosphate + NAD(+) = (2R)-3-phospho-glyceroyl phosphate + NADH + H(+). It functions in the pathway carbohydrate biosynthesis; Calvin cycle. In terms of biological role, could be involved in carbon fixation as a component of the Calvin cycle. Catalyzes the oxidative phosphorylation of glyceraldehyde 3-phosphate (G3P) to 1,3-bisphosphoglycerate (BPG) using the cofactor NAD. The first reaction step involves the formation of a hemiacetal intermediate between G3P and a cysteine residue, and this hemiacetal intermediate is then oxidized to a thioester, with concomitant reduction of NAD to NADH. The reduced NADH is then exchanged with the second NAD, and the thioester is attacked by a nucleophilic inorganic phosphate to produce BPG. The protein is Glyceraldehyde-3-phosphate dehydrogenase, chromosomal (cbbGC) of Cupriavidus necator (strain ATCC 17699 / DSM 428 / KCTC 22496 / NCIMB 10442 / H16 / Stanier 337) (Ralstonia eutropha).